Here is a 1150-residue protein sequence, read N- to C-terminus: Pyruvate carboxylase (1150 aa).

The 453-residue stretch at 3–455 (QIKKLLVANR…TTKFIEETPE (453 aa)) folds into the Biotin carboxylation domain. 4 residues coordinate ATP: lysine 119, lysine 161, histidine 211, and glutamate 278. The ATP-grasp domain maps to 123–319 (RTTAIKADLP…IVKTQILVAA (197 aa)). Arginine 294 is a catalytic residue. The Pyruvate carboxyltransferase domain maps to 533 to 802 (VLLTDTTFRD…HLRTDIEGME (270 aa)). Substrate is bound at residue 541 to 545 (RDAHQ). 4 residues coordinate Mn(2+): aspartate 542, lysine 712, histidine 741, and histidine 743. Position 712 is an N6-carboxylysine (lysine 712). The Biotinyl-binding domain maps to 1071 to 1146 (KADKSNPSHI…ATGDLLIEIE (76 aa)). Position 1112 is an N6-biotinyllysine (lysine 1112).

In terms of assembly, homotetramer. It depends on biotin as a cofactor.

The catalysed reaction is hydrogencarbonate + pyruvate + ATP = oxaloacetate + ADP + phosphate + H(+). Functionally, catalyzes a 2-step reaction, involving the ATP-dependent carboxylation of the covalently attached biotin in the first step and the transfer of the carboxyl group to pyruvate in the second. The chain is Pyruvate carboxylase (pycA) from Staphylococcus aureus (strain Mu50 / ATCC 700699).